Consider the following 413-residue polypeptide: Arginine deiminase (413 aa).

The active-site Amidino-cysteine intermediate is Cys-403.

The protein belongs to the arginine deiminase family.

The protein resides in the cytoplasm. It catalyses the reaction L-arginine + H2O = L-citrulline + NH4(+). Its pathway is amino-acid degradation; L-arginine degradation via ADI pathway; carbamoyl phosphate from L-arginine: step 1/2. The protein is Arginine deiminase of Clostridium perfringens (strain SM101 / Type A).